The primary structure comprises 470 residues: Putative dipeptidase TSTA_079200 (470 aa).

A helical membrane pass occupies residues 40 to 60 (AWLFGLGTLGIILASVLLNPF). Zn(2+) contacts are provided by His92 and Asp94. A disulfide bridge links Cys143 with Cys237. N-linked (GlcNAc...) asparagine glycosylation is present at Asn188. Residue Glu208 coordinates Zn(2+). Substrate is bound at residue His235. Zn(2+) is bound by residues His279 and His300. Residues Arg311 and Asp371 each contribute to the substrate site.

Belongs to the metallo-dependent hydrolases superfamily. Peptidase M19 family. The cofactor is Zn(2+).

Its subcellular location is the membrane. The enzyme catalyses an L-aminoacyl-L-amino acid + H2O = 2 an L-alpha-amino acid. Hydrolyzes a wide range of dipeptides. In Talaromyces stipitatus (strain ATCC 10500 / CBS 375.48 / QM 6759 / NRRL 1006) (Penicillium stipitatum), this protein is Putative dipeptidase TSTA_079200.